The following is a 181-amino-acid chain: 6,7-dimethyl-8-ribityllumazine synthase (181 aa).

5-amino-6-(D-ribitylamino)uracil contacts are provided by residues Phe24, 62–64, and 86–88; these read SFE and AII. 91 to 92 is a (2S)-2-hydroxy-3-oxobutyl phosphate binding site; that stretch reads QT. Catalysis depends on His94, which acts as the Proton donor. Phe119 provides a ligand contact to 5-amino-6-(D-ribitylamino)uracil. Position 133 (Arg133) interacts with (2S)-2-hydroxy-3-oxobutyl phosphate.

It belongs to the DMRL synthase family.

It catalyses the reaction (2S)-2-hydroxy-3-oxobutyl phosphate + 5-amino-6-(D-ribitylamino)uracil = 6,7-dimethyl-8-(1-D-ribityl)lumazine + phosphate + 2 H2O + H(+). Its pathway is cofactor biosynthesis; riboflavin biosynthesis; riboflavin from 2-hydroxy-3-oxobutyl phosphate and 5-amino-6-(D-ribitylamino)uracil: step 1/2. Catalyzes the formation of 6,7-dimethyl-8-ribityllumazine by condensation of 5-amino-6-(D-ribitylamino)uracil with 3,4-dihydroxy-2-butanone 4-phosphate. This is the penultimate step in the biosynthesis of riboflavin. The polypeptide is 6,7-dimethyl-8-ribityllumazine synthase (Microcystis aeruginosa (strain NIES-843 / IAM M-2473)).